The primary structure comprises 287 residues: 4-hydroxybenzoate octaprenyltransferase (287 aa).

The next 7 membrane-spanning stretches (helical) occupy residues 23–40 (IGSLLLLWPTLWALWLAG), 99–119 (LFVVLVLLAFGLVLTLNTMTI), 141–161 (LPQFVLGAAFGWSIPMAYAAV), 163–183 (ESLPATCWMMFLAYICWTVAY), 213–233 (LIIGLLQFSMLALLLILGTMT), 235–255 (LGMPYYISLLVAGGMFIYQQI), and 266–286 (FKAFHNNKYAGMAIFIGVLFG).

This sequence belongs to the UbiA prenyltransferase family. Requires Mg(2+) as cofactor.

The protein localises to the cell inner membrane. It catalyses the reaction all-trans-octaprenyl diphosphate + 4-hydroxybenzoate = 4-hydroxy-3-(all-trans-octaprenyl)benzoate + diphosphate. The protein operates within cofactor biosynthesis; ubiquinone biosynthesis. Functionally, catalyzes the prenylation of para-hydroxybenzoate (PHB) with an all-trans polyprenyl group. Mediates the second step in the final reaction sequence of ubiquinone-8 (UQ-8) biosynthesis, which is the condensation of the polyisoprenoid side chain with PHB, generating the first membrane-bound Q intermediate 3-octaprenyl-4-hydroxybenzoate. The polypeptide is 4-hydroxybenzoate octaprenyltransferase (Pectobacterium carotovorum subsp. carotovorum (strain PC1)).